The chain runs to 206 residues: Probable GTP-binding protein EngB (206 aa).

The EngB-type G domain maps to 7–195; sequence DCDEVVLLGR…EEALQAIFSD (189 aa). Residues 15 to 22, 41 to 45, 60 to 63, 140 to 143, and 175 to 177 each bind GTP; these read GRSNVGKS, GVTRS, DLPG, NKID, and ISA. Residues S22 and T43 each contribute to the Mg(2+) site.

Belongs to the TRAFAC class TrmE-Era-EngA-EngB-Septin-like GTPase superfamily. EngB GTPase family. Mg(2+) is required as a cofactor.

Necessary for normal cell division and for the maintenance of normal septation. The sequence is that of Probable GTP-binding protein EngB from Haloquadratum walsbyi (strain DSM 16790 / HBSQ001).